The primary structure comprises 501 residues: Sodium-coupled neutral amino acid symporter 2 (501 aa).

The interval 1–26 is disordered; sequence MSSAEMGKFDISPDEDSSSYSSNSND. Residues 1–77 lie on the Cytoplasmic side of the membrane; sequence MSSAEMGKFD…HPGTTSFGMS (77 aa). A regulates protein turnover upon amino acid deprivation region spans residues 1–97; the sequence is MSSAEMGKFD…SGILGLSYAM (97 aa). Residues 78-97 form a helical membrane-spanning segment; that stretch reads VFNLSNAIVGSGILGLSYAM. Asparagine 83 provides a ligand contact to Na(+). Residues 98–103 are Extracellular-facing; it reads ANTGIA. Residues 104-124 traverse the membrane as a helical segment; the sequence is LFVILLLVVSILSLYSVHLLL. The Cytoplasmic portion of the chain corresponds to 125 to 159; sequence KTANEGGSLLYEQLGMKAFGMPGKLAASGSITMQN. Residues 160 to 178 form a helical membrane-spanning segment; the sequence is IGAMSSYLFIVKYELPLVI. The Extracellular portion of the chain corresponds to 179 to 189; it reads KTFMNIEENAG. Residues 190-210 form a helical membrane-spanning segment; sequence HWYLNGDYLVLLVSVILILPL. Over 211–218 the chain is Cytoplasmic; it reads SLLKNLGY. A helical transmembrane segment spans residues 219-239; it reads LGYTSGFSLLCMVFFLIVVIW. Residues 240 to 287 are Extracellular-facing; sequence KMFQIPCPMESDIINATLINATLAPFADENITISDACKPEYFIFNSQT. A disulfide bridge links cysteine 246 with cysteine 276. Residues asparagine 254 and asparagine 259 are each glycosylated (N-linked (GlcNAc...) asparagine). The helical transmembrane segment at 288–308 threads the bilayer; sequence VYAVPILTFSFVCHPAILPIY. At 309 to 324 the chain is on the cytoplasmic side; that stretch reads EELKSRSRKRMMNVSY. Residues 325–345 form a helical membrane-spanning segment; that stretch reads VSFFAMFLMYLLAALFGYLTF. The Extracellular portion of the chain corresponds to 346–366; it reads YGRVESELLHTYSAFLGADIL. A helical transmembrane segment spans residues 367–387; it reads LLIVRLAVLMAVTLTVPVVIF. Threonine 381 contributes to the Na(+) binding site. Topologically, residues 388 to 408 are cytoplasmic; the sequence is PIRSSVTQLLWAGKEFSWWRH. Residues 409-429 traverse the membrane as a helical segment; sequence CSITVVLLAFTNVLVIFVPTI. Over 430 to 431 the chain is Extracellular; that stretch reads RD. Residues 432-452 form a helical membrane-spanning segment; the sequence is IFGFIGASAAAMLIFILPSAF. At 453 to 467 the chain is on the cytoplasmic side; sequence YIKLVKKEPMKSVQK. Residues 468–490 traverse the membrane as a helical segment; sequence IGAALFFLSGILVMTGCMTLIIL. The Extracellular portion of the chain corresponds to 491–501; sequence DWIHTDASDGH.

The protein belongs to the amino acid/polyamine transporter 2 family.

The protein localises to the cell membrane. The enzyme catalyses L-alanine(in) + Na(+)(in) = L-alanine(out) + Na(+)(out). The catalysed reaction is glycine(in) + Na(+)(in) = glycine(out) + Na(+)(out). It catalyses the reaction L-serine(in) + Na(+)(in) = L-serine(out) + Na(+)(out). It carries out the reaction L-proline(in) + Na(+)(in) = L-proline(out) + Na(+)(out). The enzyme catalyses L-methionine(in) + Na(+)(in) = L-methionine(out) + Na(+)(out). The catalysed reaction is L-histidine(in) + Na(+)(in) = L-histidine(out) + Na(+)(out). It catalyses the reaction L-asparagine(in) + Na(+)(in) = L-asparagine(out) + Na(+)(out). It carries out the reaction L-glutamine(in) + Na(+)(in) = L-glutamine(out) + Na(+)(out). The enzyme catalyses L-threonine(in) + Na(+)(in) = L-threonine(out) + Na(+)(out). The catalysed reaction is L-leucine(in) + Na(+)(in) = L-leucine(out) + Na(+)(out). It catalyses the reaction L-phenylalanine(in) + Na(+)(in) = L-phenylalanine(out) + Na(+)(out). Inhibited by N-methyl-D-glucamine. Inhibited by choline. Allosteric regulation of sodium ions binding by pH. Symporter that cotransports neutral amino acids and sodium ions from the extracellular to the intracellular side of the cell membrane. The transport is pH-sensitive, Li(+)-intolerant, electrogenic, driven by the Na(+) electrochemical gradient and cotransports of neutral amino acids and sodium ions with a stoichiometry of 1:1. The polypeptide is Sodium-coupled neutral amino acid symporter 2 (Gallus gallus (Chicken)).